Reading from the N-terminus, the 675-residue chain is Methionine--tRNA ligase (675 aa).

Residues proline 15–histidine 25 carry the 'HIGH' region motif. Cysteine 146, cysteine 149, cysteine 159, and cysteine 162 together coordinate Zn(2+). Residues lysine 332–serine 336 carry the 'KMSKS' region motif. Residue lysine 335 participates in ATP binding. A tRNA-binding domain is found at aspartate 573 to lysine 675.

This sequence belongs to the class-I aminoacyl-tRNA synthetase family. MetG type 1 subfamily. As to quaternary structure, homodimer. The cofactor is Zn(2+).

Its subcellular location is the cytoplasm. It catalyses the reaction tRNA(Met) + L-methionine + ATP = L-methionyl-tRNA(Met) + AMP + diphosphate. Is required not only for elongation of protein synthesis but also for the initiation of all mRNA translation through initiator tRNA(fMet) aminoacylation. The sequence is that of Methionine--tRNA ligase from Proteus mirabilis (strain HI4320).